We begin with the raw amino-acid sequence, 169 residues long: Thaumatin-like pathogenesis-related protein 3 (169 aa).

An N-terminal signal peptide occupies residues 1-21; the sequence is MATSSAVLFLLLAVFAAGASA.

This sequence belongs to the thaumatin family.

Its function is as follows. Associated with resistance against stem rust fungi. The sequence is that of Thaumatin-like pathogenesis-related protein 3 (RASTL-3) from Avena sativa (Oat).